Here is a 726-residue protein sequence, read N- to C-terminus: DNA-directed RNA polymerase subunit beta N-terminal section (726 aa).

This sequence belongs to the RNA polymerase beta chain family. As to quaternary structure, in plastids the minimal PEP RNA polymerase catalytic core is composed of four subunits: alpha, beta, beta', and beta''. When a (nuclear-encoded) sigma factor is associated with the core the holoenzyme is formed, which can initiate transcription.

Its subcellular location is the plastid. It is found in the chloroplast. It catalyses the reaction RNA(n) + a ribonucleoside 5'-triphosphate = RNA(n+1) + diphosphate. Its function is as follows. DNA-dependent RNA polymerase catalyzes the transcription of DNA into RNA using the four ribonucleoside triphosphates as substrates. The protein is DNA-directed RNA polymerase subunit beta N-terminal section (rpoB1) of Tetradesmus obliquus (Green alga).